The sequence spans 199 residues: Putative 3-methyladenine DNA glycosylase (199 aa).

The protein belongs to the DNA glycosylase MPG family.

This Chlorobium phaeobacteroides (strain BS1) protein is Putative 3-methyladenine DNA glycosylase.